Here is an 85-residue protein sequence, read N- to C-terminus: U4-theraphotoxin-Hhn1d (85 aa).

The N-terminal stretch at 1-22 is a signal peptide; the sequence is MKVTLIAILTCAAVLVLHTTAA. Residues 23–48 constitute a propeptide that is removed on maturation; the sequence is EELEAESQLMEVGMPDTELAAVDEER. 3 cysteine pairs are disulfide-bonded: Cys52–Cys66, Cys56–Cys77, and Cys71–Cys82.

This sequence belongs to the neurotoxin 12 (Hwtx-2) family. 02 (Hwtx-2) subfamily. As to expression, expressed by the venom gland.

The protein localises to the secreted. Its function is as follows. Postsynaptic neurotoxin. The chain is U4-theraphotoxin-Hhn1d from Cyriopagopus hainanus (Chinese bird spider).